The following is a 179-amino-acid chain: NADH dehydrogenase [ubiquinone] 1 beta subcomplex subunit 9 (179 aa).

Position 2 is an N-acetylalanine (Ala-2). Ser-85 carries the phosphoserine modification. A disordered region spans residues 136-162; it reads EVKQLQEETPPGGPLTEALPPARKEGD.

The protein belongs to the complex I LYR family. As to quaternary structure, mammalian complex I is composed of 45 different subunits.

It localises to the mitochondrion inner membrane. Its function is as follows. Accessory subunit of the mitochondrial membrane respiratory chain NADH dehydrogenase (Complex I), that is believed to be not involved in catalysis. Complex I functions in the transfer of electrons from NADH to the respiratory chain. The immediate electron acceptor for the enzyme is believed to be ubiquinone. The polypeptide is NADH dehydrogenase [ubiquinone] 1 beta subcomplex subunit 9 (NDUFB9) (Pongo abelii (Sumatran orangutan)).